A 170-amino-acid polypeptide reads, in one-letter code: MPLELVQGDIAHQPVDAVVTAANKQLMGGGGVDGVIHRAAGPRLLQAIRPIGGTPTGTAVITPAFDLERQGVKYVIHAVGPIWRGGQHGEAELLAGAYRESLRLGVENGCRSVAFPSISTGVYGYPLDRAAPIALATIQDFLRSHPDLSVRMVLYGADALHVFERALAQL.

The Macro domain occupies Met1–Leu170.

Belongs to the MacroD-type family.

This is Macro domain-containing protein DR_2288 from Deinococcus radiodurans (strain ATCC 13939 / DSM 20539 / JCM 16871 / CCUG 27074 / LMG 4051 / NBRC 15346 / NCIMB 9279 / VKM B-1422 / R1).